A 447-amino-acid chain; its full sequence is NAD-dependent histone deacetylase HST3 (447 aa).

The tract at residues 1–21 is disordered; that stretch reads MTSVSPSPPASRSGSMCSDLP. Residues 35-363 form the Deacetylase sirtuin-type domain; sequence LDADDEVLRR…IKKLRQLKRE (329 aa). NAD(+) is bound by residues 60–79 and 151–154; these read GAGISCNAGIPDFRSSDGLY and QNID. His187 serves as the catalytic Proton acceptor. Zn(2+) contacts are provided by Cys195, Cys198, Cys220, and Cys223. NAD(+) is bound by residues 282-284, 312-314, and Cys333; these read GTS and NKT. Residues 365-375 are compositionally biased toward basic and acidic residues; the sequence is SDLRKQMKAQK. Disordered stretches follow at residues 365–393 and 411–447; these read SDLRKQMKAQKDSIGTPPTTPLRTAQGID and KRKILSPENSSEEDEEENLDTRKRAKIRPTFGDNQAS.

Belongs to the sirtuin family. Class I subfamily. Zn(2+) is required as a cofactor.

The protein resides in the cytoplasm. It is found in the nucleus. The enzyme catalyses N(6)-acetyl-L-lysyl-[protein] + NAD(+) + H2O = 2''-O-acetyl-ADP-D-ribose + nicotinamide + L-lysyl-[protein]. In terms of biological role, NAD-dependent histone deacetylase, which contributes together with HST4 to histone H3 'Lys-56' deacetylation, regulation of telomeric silencing, proper cell cycle progression, DNA damage control, DNA recombination, and genomic maintenance. The sequence is that of NAD-dependent histone deacetylase HST3 (HST3) from Saccharomyces cerevisiae (strain ATCC 204508 / S288c) (Baker's yeast).